The following is a 244-amino-acid chain: MSVLDLNALNALPKVERILALAETNAQLEKLDAEGRVAWALENLPGNYVLSSSFGIQAAVSLHLVNQIRPDIPVILTDTGYLFPETYQFIDELTDKLKLNLKVYRAAESAAWQEARYGKLWEQGVEGIEKYNEINKVEPMNRALKELNAQTWFAGLRREQSGSRATLPVLAVQRGVFKVLPIIDWDNRTVYQYLQKHGLKYHPLWDQGYLSVGDTHTTRKWEPGMAEEETRFFGLKRECGLHEG.

The active-site Nucleophile; cysteine thiosulfonate intermediate is the Cys-239.

It belongs to the PAPS reductase family. CysH subfamily.

The protein localises to the cytoplasm. It carries out the reaction [thioredoxin]-disulfide + sulfite + adenosine 3',5'-bisphosphate + 2 H(+) = [thioredoxin]-dithiol + 3'-phosphoadenylyl sulfate. Its pathway is sulfur metabolism; hydrogen sulfide biosynthesis; sulfite from sulfate: step 3/3. Its function is as follows. Catalyzes the formation of sulfite from phosphoadenosine 5'-phosphosulfate (PAPS) using thioredoxin as an electron donor. The polypeptide is Phosphoadenosine 5'-phosphosulfate reductase (Klebsiella pneumoniae subsp. pneumoniae (strain ATCC 700721 / MGH 78578)).